Reading from the N-terminus, the 206-residue chain is Small ribosomal subunit protein uS4 (206 aa).

The S4 RNA-binding domain occupies 96 to 156; it reads GRLDNVVYRM…EKSKKQARIK (61 aa).

It belongs to the universal ribosomal protein uS4 family. Part of the 30S ribosomal subunit. Contacts protein S5. The interaction surface between S4 and S5 is involved in control of translational fidelity.

Its function is as follows. One of the primary rRNA binding proteins, it binds directly to 16S rRNA where it nucleates assembly of the body of the 30S subunit. With S5 and S12 plays an important role in translational accuracy. The sequence is that of Small ribosomal subunit protein uS4 from Haemophilus influenzae (strain ATCC 51907 / DSM 11121 / KW20 / Rd).